The primary structure comprises 70 residues: MGMRMMFIVFLLVVLATTVVSFTLDHVLGLASEGRNAKAIDNALDQRDPKRQTPGCCWHPACGKNRCGRR.

Positions 1 to 21 (MGMRMMFIVFLLVVLATTVVS) are cleaved as a signal peptide. Positions 22–51 (FTLDHVLGLASEGRNAKAIDNALDQRDPKR) are excised as a propeptide. Glutamine 52 carries the pyrrolidone carboxylic acid modification. The residue at position 54 (proline 54) is a Hydroxyproline. Cystine bridges form between cysteine 56–cysteine 62 and cysteine 57–cysteine 67. Residue cysteine 67 is modified to Cysteine amide.

In terms of tissue distribution, expressed by the venom duct.

The protein resides in the secreted. Functionally, alpha-conotoxins bind to the nicotinic acetylcholine receptors (nAChR) and inhibit them. This peptide potently blocks muscular nicotinic acetylcholine receptor (CHRNA1-CHRNB1-CHRNG-CHRND), and has no effect on neuronal receptors. It is able to totally displace [125I]-Bgtx from the Torpedo receptor with an inhibition constant (Ki) of 2.2 and 0.7 nM. The sequence is that of Alpha-conotoxin EIIB from Conus ermineus (Agate cone).